The primary structure comprises 67 residues: Prokaryotic ubiquitin-like protein Pup (67 aa).

The tract at residues 1–26 (MATKETGGQKHATRRNQEVEEIEVTT) is disordered. The tract at residues 23 to 61 (EVTTETSVRNEKLAEDVDDILDEIDEVLESNAEDFVRQF) is ARC ATPase binding. The stretch at 27-55 (ETSVRNEKLAEDVDDILDEIDEVLESNAE) forms a coiled coil. Glu-67 participates in a covalent cross-link: Isoglutamyl lysine isopeptide (Glu-Lys) (interchain with K-? in acceptor proteins).

It belongs to the prokaryotic ubiquitin-like protein family. Strongly interacts with the proteasome-associated ATPase ARC through a hydrophobic interface; the interacting region of Pup lies in its C-terminal half. There is one Pup binding site per ARC hexamer ring.

The protein operates within protein degradation; proteasomal Pup-dependent pathway. In terms of biological role, protein modifier that is covalently attached to lysine residues of substrate proteins, thereby targeting them for proteasomal degradation. The tagging system is termed pupylation. The sequence is that of Prokaryotic ubiquitin-like protein Pup from Thermobifida fusca (strain YX).